Consider the following 222-residue polypeptide: 7-cyano-7-deazaguanine synthase (222 aa).

8–18 (LSGGMDSTTLA) lines the ATP pocket. Residues C188, C196, C199, and C202 each coordinate Zn(2+).

This sequence belongs to the QueC family. Requires Zn(2+) as cofactor.

It carries out the reaction 7-carboxy-7-deazaguanine + NH4(+) + ATP = 7-cyano-7-deazaguanine + ADP + phosphate + H2O + H(+). It functions in the pathway purine metabolism; 7-cyano-7-deazaguanine biosynthesis. In terms of biological role, catalyzes the ATP-dependent conversion of 7-carboxy-7-deazaguanine (CDG) to 7-cyano-7-deazaguanine (preQ(0)). The sequence is that of 7-cyano-7-deazaguanine synthase from Methanoculleus marisnigri (strain ATCC 35101 / DSM 1498 / JR1).